The primary structure comprises 120 residues: Small ribosomal subunit protein uS13m (120 aa).

The protein belongs to the universal ribosomal protein uS13 family. In terms of assembly, part of the small ribosomal subunit.

It is found in the mitochondrion. Its function is as follows. Located at the top of the head of the small subunit, it contacts several helices of the 18S rRNA. This chain is Small ribosomal subunit protein uS13m (RPS13), found in Marchantia polymorpha (Common liverwort).